The sequence spans 557 residues: Organic cation/carnitine transporter 2 (557 aa).

Residues 1 to 20 (MRDYDEVTAFLGEWGPFQRL) lie on the Cytoplasmic side of the membrane. The helical transmembrane segment at 21–41 (IFFLLSASIIPNGFNGMSIVF) threads the bilayer. The Extracellular portion of the chain corresponds to 42–142 (LAGTPEHRCL…DLVCKDDWKA (101 aa)). N-linked (GlcNAc...) asparagine glycans are attached at residues Asn57, Asn64, and Asn91. Residues 143–163 (PLTTSLFFVGVLMGSFISGQL) form a helical membrane-spanning segment. The Cytoplasmic portion of the chain corresponds to 164–172 (SDRFGRKNV). The helical transmembrane segment at 173–193 (LFLTMGMQTGFSFLQLFSVNF) threads the bilayer. Over 194-197 (EMFT) the chain is Extracellular. A helical membrane pass occupies residues 198 to 218 (VLFVLVGMGQISNYVAAFVLG). 218-225 (GTEILSKS) contacts ATP. The Cytoplasmic portion of the chain corresponds to 219 to 232 (TEILSKSIRIIFAT). Residues 233–253 (LGVCIFYAFGFMVLPLFAYFI) traverse the membrane as a helical segment. Topologically, residues 254-257 (RDWR) are extracellular. The helical transmembrane segment at 258 to 278 (MLLLALTVPGVLCGALWWFIP) threads the bilayer. Over 279–341 (ESPRWLISQG…YDLVRTRNIR (63 aa)) the chain is Cytoplasmic. Residues 342–362 (IITIMSIILWLTISVGYFGLS) form a helical membrane-spanning segment. At 363-373 (LDTPNLHGDIY) the chain is on the extracellular side. The chain crosses the membrane as a helical span at residues 374–394 (VNCFLLAAVEVPAYVLAWLLL). At 395–406 (QHLPRRYSISAA) the chain is on the cytoplasmic side. The chain crosses the membrane as a helical span at residues 407 to 427 (LFLGGSVLLFIQLVPSELFYL). The Extracellular segment spans residues 428–430 (STA). A helical membrane pass occupies residues 431-451 (LVMVGKFGITSAYSMVYVYTA). Residues 452–462 (ELYPTVVRNMG) are Cytoplasmic-facing. The chain crosses the membrane as a helical span at residues 463 to 483 (VGVSSTASRLGSILSPYFVYL). Topologically, residues 484–488 (GAYDR) are extracellular. A Phosphotyrosine modification is found at Tyr486. A helical transmembrane segment spans residues 489–509 (FLPYILMGSLTILTAILTLFF). At 510-557 (PESFGAPLPDTIDQMLRVKGIKQWQIQSQTRTQKDGGESPTVLKSTAF) the chain is on the cytoplasmic side. The disordered stretch occupies residues 537–557 (SQTRTQKDGGESPTVLKSTAF). Position 548 is a phosphoserine (Ser548). Thr550 bears the Phosphothreonine mark.

Belongs to the major facilitator (TC 2.A.1) superfamily. Organic cation transporter (TC 2.A.1.19) family. Interacts with PDZK1. As to expression, expressed in the proximal and distal tubules and in the glomeruli in the kidney, in the myocardium, valves, and arterioles in the heart, in the labyrinthine layer of the placenta, and in the cortex, hippocampus, and cerebellum in the brain. Expressed in Sertoli cells in testis.

Its subcellular location is the cell membrane. It is found in the apical cell membrane. The protein localises to the basal cell membrane. The catalysed reaction is (R)-carnitine(out) + Na(+)(out) = (R)-carnitine(in) + Na(+)(in). It catalyses the reaction O-acetyl-(R)-carnitine(out) + Na(+)(out) = O-acetyl-(R)-carnitine(in) + Na(+)(in). The enzyme catalyses O-propanoyl-(R)-carnitine(out) + Na(+)(out) = O-propanoyl-(R)-carnitine(in) + Na(+)(in). It carries out the reaction glycine betaine(out) + Na(+)(out) = glycine betaine(in) + Na(+)(in). The catalysed reaction is glycine betaine(out) + (R)-carnitine(in) = glycine betaine(in) + (R)-carnitine(out). It catalyses the reaction O-butanoyl-(R)-carnitine(out) + Na(+)(out) = O-butanoyl-(R)-carnitine(in) + Na(+)(in). The enzyme catalyses (S)-carnitine(out) + Na(+)(out) = (S)-carnitine(in) + Na(+)(in). It carries out the reaction an O-acyl-(R)-carnitine(out) + Na(+)(out) = an O-acyl-(R)-carnitine(in) + Na(+)(in). The catalysed reaction is L-glutamyl-L-arginyl-glycyl-L-methionyl-L-threonine(out) + Na(+)(out) = L-glutamyl-L-arginyl-glycyl-L-methionyl-L-threonine(in) + Na(+)(in). It catalyses the reaction N,N-dimethylglycine(out) + Na(+)(out) = N,N-dimethylglycine(in) + Na(+)(in). With respect to regulation, inhibited by emetine, quinidine and verapamil. The IC(50) of emetine is 4.2 uM. Not inhibited by valproic acid. Transport of (R)-carnitine is stimulated by cholesterol in the plasma membrane. Sodium-ion dependent, high affinity carnitine transporter. Involved in the active cellular uptake of carnitine. Transports one sodium ion with one molecule of carnitine. Also transports organic cations such as tetraethylammonium (TEA) without the involvement of sodium. Also relative uptake activity ratio of carnitine to TEA is 11.3. May also contribute to regulate the transport of organic compounds in testis across the blood-testis-barrier. The chain is Organic cation/carnitine transporter 2 (Slc22a5) from Rattus norvegicus (Rat).